The primary structure comprises 189 residues: Coatomer subunit zeta (189 aa).

This sequence belongs to the adaptor complexes small subunit family. Oligomeric complex that consists of at least the alpha, beta, beta', gamma, delta, epsilon and zeta subunits.

It is found in the cytoplasm. The protein resides in the golgi apparatus membrane. It localises to the cytoplasmic vesicle. Its subcellular location is the COPI-coated vesicle membrane. The coatomer is a cytosolic protein complex that binds to dilysine motifs and reversibly associates with Golgi non-clathrin-coated vesicles, which further mediate biosynthetic protein transport from the ER, via the Golgi up to the trans Golgi network. Coatomer complex is required for budding from Golgi membranes, and is essential for the retrograde Golgi-to-ER transport of dilysine-tagged proteins. The zeta subunit may be involved in regulating the coat assembly and, hence, the rate of biosynthetic protein transport due to its association-dissociation properties with the coatomer complex. This Saccharomyces cerevisiae (strain ATCC 204508 / S288c) (Baker's yeast) protein is Coatomer subunit zeta (RET3).